Consider the following 116-residue polypeptide: Large ribosomal subunit protein uL18 (116 aa).

Belongs to the universal ribosomal protein uL18 family. In terms of assembly, part of the 50S ribosomal subunit; part of the 5S rRNA/L5/L18/L25 subcomplex. Contacts the 5S and 23S rRNAs.

Its function is as follows. This is one of the proteins that bind and probably mediate the attachment of the 5S RNA into the large ribosomal subunit, where it forms part of the central protuberance. The chain is Large ribosomal subunit protein uL18 from Acholeplasma laidlawii (strain PG-8A).